The following is a 379-amino-acid chain: NADH-rubredoxin oxidoreductase (379 aa).

2 cysteine pairs are disulfide-bonded: cysteine 26-cysteine 286 and cysteine 137-cysteine 216. Residues 33 to 35 (NSE), arginine 42, alanine 79, and tyrosine 125 each bind FAD. Aspartate 259 contacts FAD.

This sequence belongs to the FAD-dependent oxidoreductase family. Monomer. The cofactor is FAD.

The enzyme catalyses 2 reduced [rubredoxin] + NAD(+) + H(+) = 2 oxidized [rubredoxin] + NADH. In terms of biological role, catalyzes the NADH-dependent reduction of rubredoxin (Rd). NADPH is a very poor electron donor compared to NADH. Functions as an intermediate component in the electron transfer chain: NADH-&gt;NROR-&gt;Rd-&gt;FprA1/2. Also functions as an intermediate component in the electron transfer chains from NADH to revRbr and Dfx. Therefore, is a key electron carrier in an efficient multienzyme complex that can scavenge O(2) and reactive oxygen species (ROS), and thus plays an important role in the oxidative stress defense system in C.acetobutylicum, an obligate anaerobic bacterium. This chain is NADH-rubredoxin oxidoreductase (nroR), found in Clostridium acetobutylicum (strain ATCC 824 / DSM 792 / JCM 1419 / IAM 19013 / LMG 5710 / NBRC 13948 / NRRL B-527 / VKM B-1787 / 2291 / W).